The following is a 441-amino-acid chain: 3-phosphoshikimate 1-carboxyvinyltransferase (441 aa).

Polar residues predominate over residues Met1–Ser10. The disordered stretch occupies residues Met1–Gly21. 3-phosphoshikimate contacts are provided by Lys29, Ser30, and Arg34. Residue Lys29 participates in phosphoenolpyruvate binding. Residues Gly103 and Arg132 each coordinate phosphoenolpyruvate. 3-phosphoshikimate-binding residues include Ser177, Gln179, Asp328, and Lys355. Phosphoenolpyruvate is bound at residue Gln179. Catalysis depends on Asp328, which acts as the Proton acceptor. Positions 359 and 401 each coordinate phosphoenolpyruvate.

The protein belongs to the EPSP synthase family. Monomer.

It localises to the cytoplasm. It carries out the reaction 3-phosphoshikimate + phosphoenolpyruvate = 5-O-(1-carboxyvinyl)-3-phosphoshikimate + phosphate. Its pathway is metabolic intermediate biosynthesis; chorismate biosynthesis; chorismate from D-erythrose 4-phosphate and phosphoenolpyruvate: step 6/7. Its function is as follows. Catalyzes the transfer of the enolpyruvyl moiety of phosphoenolpyruvate (PEP) to the 5-hydroxyl of shikimate-3-phosphate (S3P) to produce enolpyruvyl shikimate-3-phosphate and inorganic phosphate. The polypeptide is 3-phosphoshikimate 1-carboxyvinyltransferase (Prochlorococcus marinus (strain MIT 9303)).